We begin with the raw amino-acid sequence, 547 residues long: Glucose-6-phosphate isomerase 2 (547 aa).

Glu351 functions as the Proton donor in the catalytic mechanism. Residues His382 and Lys508 contribute to the active site.

This sequence belongs to the GPI family.

It is found in the cytoplasm. The catalysed reaction is alpha-D-glucose 6-phosphate = beta-D-fructose 6-phosphate. The protein operates within carbohydrate biosynthesis; gluconeogenesis. Its pathway is carbohydrate degradation; glycolysis; D-glyceraldehyde 3-phosphate and glycerone phosphate from D-glucose: step 2/4. Catalyzes the reversible isomerization of glucose-6-phosphate to fructose-6-phosphate. This Neisseria gonorrhoeae (strain ATCC 700825 / FA 1090) protein is Glucose-6-phosphate isomerase 2.